The following is a 344-amino-acid chain: MAPSKQYDEGGQLQLMDAERIEEEEECFESIDKLISQGINSGDVKKLQDAGIYTCNGLMMHTKKSLTGIKGLSEAKVDKICEAAEKLLSQGFMTGSDLLIKRKSVVRITTGSQALDELLGGGIETLCITEAFGEFRSGKTQLAHTLCVSTQLPIHMHGGNGKVAYIDTEGTFRPERIVPIAERFGMDANAVLDNIIYARAYTYEHQYNLLLGLAAKMAEEPFRLLIVDSVIALFRVDFSGRGELAERQQKLAQMLSRLTKIAEEFNVAVYITNQVIADPGGGMFITDPKKPAGGHVLAHAATIRLMLRKGKGEQRVCKIFDAPNLPEGEAVFQVTSGGIMDAKD.

133-140 (GEFRSGKT) lines the ATP pocket. Arg-235 is a dsDNA binding site. SsDNA is bound by residues Arg-235, Phe-238, Arg-241, Arg-247, and Arg-315. The dsDNA site is built by Arg-241 and Arg-247.

This sequence belongs to the RecA family. DMC1 subfamily. As to expression, highly expressed in spikelets. Expressed in meiotic young panicles.

It localises to the nucleus. Recombinase that may participate in meiotic recombination, specifically in homologous strand assimilation, which is required for the resolution of meiotic double-strand breaks. Exhibits DNA-dependent ATPase activity when bound to single-stranded DNA (ssDNA). Mediates renaturation of homologous complementary strands as well as assimilation of single strands into homologous supercoiled duplexes leading to D-loop formation. Binds circular single-stranded DNA (ssDNA) and circular double-stranded DNA (dsDNA) in vitro. Catalyzes DNA homologous renaturation and DNA strand exchange. The rates of these activities are dependent on the state of ATP hydrolysis. Forms helical filaments along ssDNA and dsDNA, and promotes strand exchange between ssDNA and dsDNA with long DNA substrates of several thousand base pairs. The presence of the replication protein A is not required for this activity. Seems to be required for homologous pairing and subsequent chromosome segregation during male meiosis. May be not directly required for homologous pairing during male meiosis. Required for synaptonemal complex assembly and crossover formation. Functions redundantly with DMC1A. In Oryza sativa subsp. japonica (Rice), this protein is Meiotic recombination protein DMC1 homolog B.